We begin with the raw amino-acid sequence, 380 residues long: Erythronate-4-phosphate dehydrogenase (380 aa).

2 residues coordinate substrate: S45 and T66. NAD(+)-binding positions include D146, T174, 205–207 (ASR), and D231. R207 is an active-site residue. E236 is an active-site residue. H253 serves as the catalytic Proton donor. G256 serves as a coordination point for NAD(+). Y257 is a binding site for substrate.

Belongs to the D-isomer specific 2-hydroxyacid dehydrogenase family. PdxB subfamily. As to quaternary structure, homodimer.

It localises to the cytoplasm. The enzyme catalyses 4-phospho-D-erythronate + NAD(+) = (R)-3-hydroxy-2-oxo-4-phosphooxybutanoate + NADH + H(+). It participates in cofactor biosynthesis; pyridoxine 5'-phosphate biosynthesis; pyridoxine 5'-phosphate from D-erythrose 4-phosphate: step 2/5. Its function is as follows. Catalyzes the oxidation of erythronate-4-phosphate to 3-hydroxy-2-oxo-4-phosphonooxybutanoate. This chain is Erythronate-4-phosphate dehydrogenase, found in Pseudomonas putida (strain ATCC 700007 / DSM 6899 / JCM 31910 / BCRC 17059 / LMG 24140 / F1).